An 886-amino-acid chain; its full sequence is Cytosolic carboxypeptidase-like protein 5 (886 aa).

The 414-residue stretch at 157-570 (YPFSYSDCQE…AMAIAALDMA (414 aa)) folds into the Peptidase M14 domain. Zn(2+) is bound by residues H252 and E255. Residues 344–354 (SQSSSEHQPSS) are compositionally biased toward low complexity. Residues 344 to 364 (SQSSSEHQPSSCLPPDAPVSD) are disordered. H434 is a binding site for Zn(2+). The active-site Proton donor/acceptor is E516. Disordered stretches follow at residues 605 to 734 (STLN…SSHK) and 784 to 848 (LQAR…FSPI). Residues 631-640 (CSENTLSRAR) are compositionally biased toward polar residues. Over residues 641–666 (SFSTGTSAGGSSSSQQNSPQMKNSPS) the composition is skewed to low complexity. Basic and acidic residues predominate over residues 696–705 (REPRSQDRRR). The segment covering 714–732 (PAGSLAPSPAPTSSGPASS) has biased composition (low complexity). S841 is subject to Phosphoserine.

This sequence belongs to the peptidase M14 family. The cofactor is Zn(2+). As to expression, expressed in brain.

The protein resides in the cytoplasm. It is found in the cytosol. Its subcellular location is the nucleus. The protein localises to the cytoskeleton. It localises to the spindle. The protein resides in the midbody. It catalyses the reaction gamma-L-glutamyl-L-glutamyl-[protein] + H2O = L-glutamyl-[protein] + L-glutamate. The catalysed reaction is (L-glutamyl)(n+1)-gamma-L-glutamyl-L-glutamyl-[protein] + H2O = (L-glutamyl)(n)-gamma-L-glutamyl-L-glutamyl-[protein] + L-glutamate. It carries out the reaction C-terminal L-alpha-aminoacyl-L-glutamyl-[tubulin] + H2O = C-terminal L-alpha-aminoacyl-[tubulin] + L-glutamate. The enzyme catalyses C-terminal L-alpha-aminoacyl-L-glutamyl-L-glutamyl-[tubulin] + H2O = C-terminal L-alpha-aminoacyl-L-glutamyl-[tubulin] + L-glutamate. Its function is as follows. Metallocarboxypeptidase that mediates deglutamylation of tubulin and non-tubulin target proteins. Catalyzes the removal of polyglutamate side chains present on the gamma-carboxyl group of glutamate residues within the C-terminal tail of alpha- and beta-tubulin. Cleaves alpha- and gamma-linked polyglutamate tubulin side-chain, as well as the branching point glutamate. Also catalyzes the removal of alpha-linked glutamate residues from the carboxy-terminus of alpha-tubulin. Mediates deglutamylation of nucleotidyltransferase CGAS, leading to CGAS antiviral defense response activation. The sequence is that of Cytosolic carboxypeptidase-like protein 5 from Homo sapiens (Human).